Consider the following 25-residue polypeptide: Repetitive proline-rich cell wall protein (25 aa).

The tract at residues Asn-1–Pro-25 is disordered. Tandem repeats lie at residues Pro-5–Lys-9, Pro-10–Lys-14, Pro-15–Lys-19, and Pro-20–Lys-24. The interval Pro-5–Lys-24 is 4 X 5 AA tandem repeats of P-P-V-[EY]-K. 4-hydroxyproline is present on residues Pro-6, Pro-11, Pro-16, and Pro-21. A compositionally biased stretch (pro residues) spans Glu-8 to Pro-25.

Belongs to the plant proline-rich protein superfamily. ENOD12 family.

It localises to the secreted. It is found in the cell wall. This chain is Repetitive proline-rich cell wall protein, found in Phaseolus vulgaris (Kidney bean).